A 373-amino-acid chain; its full sequence is LIM domain-binding protein 1 (373 aa).

Disordered regions lie at residues 248 to 297 (PPAE…LSSQ) and 329 to 373 (DAAN…QASQ). The segment covering 266–282 (SGGSTMSSGGGNTNNSN) has biased composition (low complexity). The segment covering 288-297 (PASTFALSSQ) has biased composition (polar residues). The region spanning 298 to 337 (DVMVVGEPTLMGGEFGDEDERLITRLENTQFDAANGIDDE) is the LIM interaction domain (LID) domain.

This sequence belongs to the LDB family. In terms of assembly, forms homodimers and heterodimers. Interacts with and activates lhx1/lim1. The stoichiometry of lhx1/lim1 and ldb1 is important for their function and an excess of ldb1 can inhibit lhx1/lim1 function. When bound to lhx1/lim1, escapes degradation by rnf12. Interacts with the N-terminal region of rnf12. Undergoes rnf12-mediated ubiquitin-proteasome-dependent degradation.

It is found in the nucleus. Functionally, binds to the LIM domain of a wide variety of LIM domain-containing transcription factors. Acts as a coactivator together with otx2 to stimulate lhx1/lim1-mediated activation of the gsc promoter in the Spemann organizer. Acts synergistically with lhx1/lim1 and ssbp in axis formation. In Xenopus tropicalis (Western clawed frog), this protein is LIM domain-binding protein 1.